The sequence spans 234 residues: Probable pectate lyase F (234 aa).

The N-terminal stretch at 1 to 17 (MWSSIAAFPVLVPVALA) is a signal peptide.

The protein belongs to the polysaccharide lyase 3 family. Ca(2+) is required as a cofactor.

The protein localises to the secreted. It catalyses the reaction Eliminative cleavage of (1-&gt;4)-alpha-D-galacturonan to give oligosaccharides with 4-deoxy-alpha-D-galact-4-enuronosyl groups at their non-reducing ends.. Pectinolytic enzyme consist of four classes of enzymes: pectin lyase, polygalacturonase, pectin methylesterase and rhamnogalacturonase. Among pectinolytic enzymes, pectin lyase is the most important in depolymerization of pectin, since it cleaves internal glycosidic bonds of highly methylated pectins. Favors pectate, the anion, over pectin, the methyl ester. This chain is Probable pectate lyase F (plyF), found in Aspergillus fumigatus (strain ATCC MYA-4609 / CBS 101355 / FGSC A1100 / Af293) (Neosartorya fumigata).